Consider the following 473-residue polypeptide: Lactate utilization protein B (473 aa).

2 4Fe-4S ferredoxin-type domains span residues 302–332 and 351–380; these read GSEF…GHSY and YNDY…LHDL. [4Fe-4S] cluster is bound by residues Cys311, Cys314, Cys317, Cys321, Cys364, Cys367, and Cys371.

It belongs to the LutB/YkgF family.

Functionally, is involved in L-lactate degradation and allows cells to grow with lactate as the sole carbon source. Has probably a role as an electron transporter during oxidation of L-lactate. This chain is Lactate utilization protein B, found in Bacillus cereus (strain AH820).